The following is a 218-amino-acid chain: Regulator of G-protein signaling 20 (218 aa).

Residues 1 to 10 (MGSERTEMRK) show a composition bias toward basic and acidic residues. The disordered stretch occupies residues 1–26 (MGSERTEMRKRQMAATQETPGTAQAQ). A compositionally biased stretch (polar residues) spans 14–26 (AATQETPGTAQAQ). An RGS domain is found at 92 to 208 (SFDKLMLTPA…MNSAIYKDLL (117 aa)).

Forms a complex with G(alpha)z/i2 subunits and mu-opioid receptors; the formation of this complex results in mu-opioid receptor desensitization. Interacts with OPRM1. Fatty acylated. Heavily palmitoylated in the cysteine string motif. Post-translationally, N- and O-glycosylated in synapsomal membranes. In terms of processing, sumoylated by SUMO1 and SUM02 in synaptosomes. The sumoylated forms act as a scaffold for sequestering mu-opioid receptor-activated G(alpha) subunits.

The protein resides in the membrane. The protein localises to the nucleus. It is found in the cytoplasm. Inhibits signal transduction by increasing the GTPase activity of G protein alpha subunits thereby driving them into their inactive GDP-bound form. Binds selectively to G(z)-alpha and G(alpha)-i2 subunits, accelerates their GTPase activity and regulates their signaling activities. The G(z)-alpha activity is inhibited by the phosphorylation and palmitoylation of the G-protein. Negatively regulates mu-opioid receptor-mediated activation of the G-proteins. This chain is Regulator of G-protein signaling 20 (RGS20), found in Gallus gallus (Chicken).